Here is a 401-residue protein sequence, read N- to C-terminus: Lipid-A-disaccharide synthase (401 aa).

It belongs to the LpxB family.

The enzyme catalyses a lipid X + a UDP-2-N,3-O-bis[(3R)-3-hydroxyacyl]-alpha-D-glucosamine = a lipid A disaccharide + UDP + H(+). It functions in the pathway bacterial outer membrane biogenesis; LPS lipid A biosynthesis. Functionally, condensation of UDP-2,3-diacylglucosamine and 2,3-diacylglucosamine-1-phosphate to form lipid A disaccharide, a precursor of lipid A, a phosphorylated glycolipid that anchors the lipopolysaccharide to the outer membrane of the cell. The sequence is that of Lipid-A-disaccharide synthase from Rhodospirillum centenum (strain ATCC 51521 / SW).